Here is a 261-residue protein sequence, read N- to C-terminus: MSESLHLTRNGPILEITLDRPKANAIDAKTSFAMGEAFLNFRDDPELRVAIITGGGEKFFSAGWDLKAAAEGEAPDADFGSGGFAGLTEIFDLDKPVIAAVNGYAFGGGFELALAADFIVCAENASFALPEAKLGIVPDSGGVLRLPKLLPPAIVNEMVMTGRRMSAEEALRWGVVNRVVSQSELMDSARELAQQLVNSAPLAIAALKEIYRATSEMPVEEGYRYIRSGVLKHYPSVLHSEDALEGPQAFAEKRDPVWKGR.

Glutamate 111 functions as the Nucleophile in the catalytic mechanism. Catalysis depends on glutamate 131, which acts as the Proton acceptor.

Belongs to the enoyl-CoA hydratase/isomerase family.

The catalysed reaction is (R)-carnitinyl-CoA = crotonobetainyl-CoA + H2O. It participates in amine and polyamine metabolism; carnitine metabolism. Its function is as follows. Catalyzes the reversible dehydration of L-carnitinyl-CoA to crotonobetainyl-CoA. The protein is Carnitinyl-CoA dehydratase of Salmonella enteritidis PT4 (strain P125109).